The primary structure comprises 409 residues: DEP domain-containing mTOR-interacting protein (409 aa).

M1 is subject to N-acetylmethionine. Residues 1-10 (MEEGSSGGSG) are compositionally biased toward gly residues. Positions 1-23 (MEEGSSGGSGSSDSNAGGSGGVQ) are disordered. DEP domains follow at residues 36 to 119 (TGEQ…RFRK) and 146 to 219 (PETT…QFRM). A DDEX motif motif is present at residues 217 to 235 (FRMNFRRRRRLMELLNETS). A Phosphoserine modification is found at S235. Residue T241 is modified to Phosphothreonine. 2 positions are modified to phosphoserine: S244 and S258. T259 carries the post-translational modification Phosphothreonine. Phosphoserine occurs at positions 263, 265, 280, 282, 283, 286, and 287. The BetaTrCP degron motif motif lies at 286–291 (SSGYFS). Y289 carries the post-translational modification Phosphotyrosine. Phosphoserine is present on residues S291 and S293. T295 bears the Phosphothreonine mark. Phosphoserine occurs at positions 297, 298, and 299. The region spanning 330 to 407 (TFTIVGDAVG…TIVMEVMEEL (78 aa)) is the PDZ domain.

As to quaternary structure, associated component of the mechanistic target of rapamycin complex 1 (mTORC1) which contains MTOR, MLST8 and RPTOR. Associated component of the mechanistic target of rapamycin complex 2 (mTORC2) which contains MTOR, MLST8, PROTOR1, RICTOR, MAPKAP1 and DEPTOR. Interacts (via PDZ domain) with MTOR; interacts with MTOR within both mTORC1 and mTORC2. Interacts (via PDZ domain) with MINAR1 (via N-terminus). Interacts with SIK3. Post-translationally, phosphorylation weakens interaction with MTOR within mTORC1 and mTORC2. Phosphorylated at Ser-286, Ser-287 and Ser-291 in response to mitogenic stimulation by MTOR: DEPTOR is either directly phosphorylated by MTOR or indirectly via proteins kinases that are activated by MTOR, such as CK1/CSNK1A1. Phosphorylation at Ser-286, Ser-287 and Ser-291 promotes ubiquitination by the SCF(BTRC) complex, followed by degradation. Phosphorylation at Ser-235 by MAPK3/ERK1 promotes deubiquitination by USP7, enhancing its stability. Phosphorylation at Tyr-291 by SYK impairs its interaction with MTOR, promoting mTORC1 and mTORC2 signaling. In terms of processing, ubiquitinated; leading to proteasomal degradation. Ubiquitination by the SCF(BTRC) and SCF(FBXW11) complexes following phosphorylation at Ser-286, Ser-287 and Ser-291 by MTOR, leads to its degradation by the proteasome. Deubiquitinated by OTUB1 in response to amino acid via a non-canonical mechanism, leading to DEPTOR stability. Deubiquitinated by USP7 following phosphorylation at Ser-235, promoting its stability.

The protein resides in the lysosome membrane. With respect to regulation, inhibited upon phosphatidic acid-binding: phosphatidic acid produced upon mitogenic stimulation promotes DEPTOR dissociatiom from the mTORC1 and mTORC2 complexes, leading to their activation. Specifically binds unsaturated phosphatidic acid, such as 16:0-18:1, 18:0-18:1 and di-18:1. Inhibited when nutrients are present via a feedback loop: phosphorylation by MTOR promotes DEPTOR ubiquitination and degradation. Its function is as follows. Negative regulator of the mTORC1 and mTORC2 complexes: inhibits the protein kinase activity of MTOR, thereby inactivating both complexes. DEPTOR inhibits mTORC1 and mTORC2 to induce autophagy. In contrast to AKT1S1/PRAS40, only partially inhibits mTORC1 activity. The polypeptide is DEP domain-containing mTOR-interacting protein (Mus musculus (Mouse)).